Reading from the N-terminus, the 194-residue chain is 7-methyl-GTP pyrophosphatase (194 aa).

Asp-69 serves as the catalytic Proton acceptor.

Belongs to the Maf family. YceF subfamily. It depends on a divalent metal cation as a cofactor.

Its subcellular location is the cytoplasm. It carries out the reaction N(7)-methyl-GTP + H2O = N(7)-methyl-GMP + diphosphate + H(+). Its function is as follows. Nucleoside triphosphate pyrophosphatase that hydrolyzes 7-methyl-GTP (m(7)GTP). May have a dual role in cell division arrest and in preventing the incorporation of modified nucleotides into cellular nucleic acids. This is 7-methyl-GTP pyrophosphatase (yceF) from Shigella flexneri.